Reading from the N-terminus, the 291-residue chain is Light-independent protochlorophyllide reductase iron-sulfur ATP-binding protein (291 aa).

ATP contacts are provided by residues 10–15 (GIGKST) and K39. S14 serves as a coordination point for Mg(2+). [4Fe-4S] cluster is bound by residues C95 and C129. Position 180–181 (180–181 (NR)) interacts with ATP.

The protein belongs to the NifH/BchL/ChlL family. Homodimer. Protochlorophyllide reductase is composed of three subunits; ChlL, ChlN and ChlB. The cofactor is [4Fe-4S] cluster.

It localises to the plastid. Its subcellular location is the chloroplast. It carries out the reaction chlorophyllide a + oxidized 2[4Fe-4S]-[ferredoxin] + 2 ADP + 2 phosphate = protochlorophyllide a + reduced 2[4Fe-4S]-[ferredoxin] + 2 ATP + 2 H2O. Its pathway is porphyrin-containing compound metabolism; chlorophyll biosynthesis (light-independent). In terms of biological role, component of the dark-operative protochlorophyllide reductase (DPOR) that uses Mg-ATP and reduced ferredoxin to reduce ring D of protochlorophyllide (Pchlide) to form chlorophyllide a (Chlide). This reaction is light-independent. The L component serves as a unique electron donor to the NB-component of the complex, and binds Mg-ATP. The sequence is that of Light-independent protochlorophyllide reductase iron-sulfur ATP-binding protein from Pinus contorta (Shore pine).